Here is a 177-residue protein sequence, read N- to C-terminus: Coatomer subunit zeta-3 (177 aa).

This sequence belongs to the adaptor complexes small subunit family. Oligomeric complex that consists of at least the alpha, beta, beta', gamma, delta, epsilon and zeta subunits.

Its subcellular location is the cytoplasm. The protein localises to the golgi apparatus membrane. It is found in the cytoplasmic vesicle. It localises to the COPI-coated vesicle membrane. The coatomer is a cytosolic protein complex that binds to dilysine motifs and reversibly associates with Golgi non-clathrin-coated vesicles, which further mediate biosynthetic protein transport from the ER, via the Golgi up to the trans Golgi network. Coatomer complex is required for budding from Golgi membranes, and is essential for the retrograde Golgi-to-ER transport of dilysine-tagged proteins. The zeta subunit may be involved in regulating the coat assembly and, hence, the rate of biosynthetic protein transport due to its association-dissociation properties with the coatomer complex. The sequence is that of Coatomer subunit zeta-3 from Oryza sativa subsp. japonica (Rice).